A 107-amino-acid chain; its full sequence is SH3 domain-binding glutamic acid-rich-like protein 2 (107 aa).

An SH3-binding motif is present at residues 61–67; sequence QGNPLPP.

This sequence belongs to the SH3BGR family.

Its subcellular location is the nucleus. The chain is SH3 domain-binding glutamic acid-rich-like protein 2 (SH3BGRL2) from Pongo abelii (Sumatran orangutan).